Reading from the N-terminus, the 333-residue chain is Minor fimbrium tip subunit MfA4 (333 aa).

The signal sequence occupies residues 1-18; that stretch reads MKKYLLYASLLTSVLLFS. C19 carries N-palmitoyl cysteine lipidation. Residue C19 is the site of S-diacylglycerol cysteine attachment. Residues 19-53 constitute a propeptide that is removed on maturation; it reads CSKNNPSEPVEDRSIEISIRVDDFTKTGETVRYER.

The protein belongs to the bacteroidetes fimbrillin superfamily. FimA/Mfa1 family. In terms of assembly, component of the fimbrium tip. Minor fimbriae are composed of a structural subunit, most often Mfa1, and the accessory subunits Mfa3, Mfa4 and Mfa5. Mfa4 is required for Mfa3 and Mfa5 insertion into the fimbrium. Fimbrium assembly occurs by linear, head-to-tail oligomerization of fimbrial subunits. This is mediated via insertion of a C-terminal beta-strand from one subunit into a groove in the N-terminal domain of the following subunit.

It localises to the fimbrium. The protein resides in the cell outer membrane. Functionally, tip subunit of the minor fimbriae. These filamentous pili are attached to the cell surface; they mediate biofilm formation, adhesion onto host cells and onto other bacteria that are part of the oral microbiome. They play an important role in invasion of periodontal tissues and are recognized as major virulence factors. In Porphyromonas gingivalis (strain ATCC 33277 / DSM 20709 / CIP 103683 / JCM 12257 / NCTC 11834 / 2561), this protein is Minor fimbrium tip subunit MfA4.